The primary structure comprises 340 residues: Alcohol dehydrogenase patD (340 aa).

Cys46 is a binding site for Zn(2+). Residue His47 coordinates NAD(+). Residues His67, Glu68, Cys101, Cys104, Cys112, and Cys154 each coordinate Zn(2+). His67 serves as a coordination point for substrate. Residues 178-183 (GLGGLG), 198-203 (VALSRD), Lys206, 265-267 (LSI), 289-291 (PSG), and 297-299 (EDA) each bind NAD(+).

Belongs to the zinc-containing alcohol dehydrogenase family. The cofactor is Zn(2+).

Its subcellular location is the cytoplasm. The protein localises to the cytosol. The catalysed reaction is neopatulin + NADPH + H(+) = (E)-ascladiol + NADP(+). It functions in the pathway mycotoxin biosynthesis; patulin biosynthesis. Alcohol dehydrogenase; part of the gene cluster that mediates the biosynthesis of patulin, an acetate-derived tetraketide mycotoxin produced by several fungal species that shows antimicrobial properties against several bacteria. PatD catalyzes the conversion of neopatulin into E-ascladiol. The pathway begins with the synthesis of 6-methylsalicylic acid by the polyketide synthase (PKS) patK via condensation of acetate and malonate units. The 6-methylsalicylic acid decarboxylase patG then catalyzes the decarboxylation of 6-methylsalicylic acid to yield m-cresol (also known as 3-methylphenol). These first reactions occur in the cytosol. The intermediate m-cresol is then transported into the endoplasmic reticulum where the cytochrome P450 monooxygenase patH converts it to m-hydroxybenzyl alcohol, which is further converted to gentisyl alcohol by the cytochrome P450 monooxygenase patI. The oxidoreductases patJ and patO further convert gentisyl alcohol to isoepoxydon in the vacuole. PatN catalyzes then the transformation of isoepoxydon into phyllostine. The cluster protein patF is responsible for the conversion from phyllostine to neopatulin whereas the alcohol dehydrogenase patD converts neopatulin to E-ascladiol. The steps between isoepoxydon and E-ascladiol occur in the cytosol, and E-ascladiol is probably secreted to the extracellular space by one of the cluster-specific transporters patC or patM. Finally, the secreted patulin synthase patE catalyzes the conversion of E-ascladiol to patulin. This Penicillium expansum (Blue mold rot fungus) protein is Alcohol dehydrogenase patD.